Reading from the N-terminus, the 444-residue chain is Maintenance of mitochondrial morphology protein 1 (444 aa).

A compositionally biased stretch (polar residues) spans 1–16 (MKGVENTLSQSESVNR). A disordered region spans residues 1–20 (MKGVENTLSQSESVNRGYNG). At 1-107 (MKGVENTLSQ…TFSSRSFAEG (107 aa)) the chain is on the lumenal side. The helical transmembrane segment at 108–128 (LVVGQLSVIVVLIFFIKFFIF) threads the bilayer. Topologically, residues 129–444 (SDGPAKTGGG…QEEDPSRAPE (316 aa)) are cytoplasmic. The tract at residues 136-157 (GGGGGSSAESRSSGFTGSPLTS) is disordered. The segment covering 142 to 157 (SAESRSSGFTGSPLTS) has biased composition (low complexity). The SMP-LTD domain occupies 204-418 (SPESLDWFNV…EPRFQFVKLP (215 aa)). A disordered region spans residues 425–444 (KNTREEKSDMQEEDPSRAPE). The span at 426–444 (NTREEKSDMQEEDPSRAPE) shows a compositional bias: basic and acidic residues.

Belongs to the MMM1 family. Homodimer. Component of the ER-mitochondria encounter structure (ERMES) or MDM complex, composed of MMM1, MDM10, MDM12 and MDM34. An MMM1 homodimer associates with one molecule of MDM12 on each side in a pairwise head-to-tail manner, and the SMP-LTD domains of MMM1 and MDM12 generate a continuous hydrophobic tunnel for phospholipid trafficking.

The protein localises to the endoplasmic reticulum membrane. Component of the ERMES/MDM complex, which serves as a molecular tether to connect the endoplasmic reticulum (ER) and mitochondria. Components of this complex are involved in the control of mitochondrial shape and protein biogenesis, and function in nonvesicular lipid trafficking between the ER and mitochondria. The MDM12-MMM1 subcomplex functions in the major beta-barrel assembly pathway that is responsible for biogenesis of all outer membrane beta-barrel proteins, and acts in a late step after the SAM complex. The MDM10-MDM12-MMM1 subcomplex further acts in the TOM40-specific pathway after the action of the MDM12-MMM1 complex. Essential for establishing and maintaining the structure of mitochondria and maintenance of mtDNA nucleoids. The polypeptide is Maintenance of mitochondrial morphology protein 1 (Eremothecium gossypii (strain ATCC 10895 / CBS 109.51 / FGSC 9923 / NRRL Y-1056) (Yeast)).